Consider the following 50-residue polypeptide: Large ribosomal subunit protein bL33B (50 aa).

It belongs to the bacterial ribosomal protein bL33 family.

In Enterococcus faecalis (strain ATCC 700802 / V583), this protein is Large ribosomal subunit protein bL33B (rpmG2).